A 96-amino-acid chain; its full sequence is CRISPR-associated endoribonuclease Cas2 1 (96 aa).

Aspartate 8 provides a ligand contact to Mg(2+).

Belongs to the CRISPR-associated endoribonuclease Cas2 protein family. As to quaternary structure, homodimer, forms a heterotetramer with a Cas1 homodimer. The cofactor is Mg(2+).

CRISPR (clustered regularly interspaced short palindromic repeat), is an adaptive immune system that provides protection against mobile genetic elements (viruses, transposable elements and conjugative plasmids). CRISPR clusters contain sequences complementary to antecedent mobile elements and target invading nucleic acids. CRISPR clusters are transcribed and processed into CRISPR RNA (crRNA). Functions as a ssRNA-specific endoribonuclease. Involved in the integration of spacer DNA into the CRISPR cassette. This chain is CRISPR-associated endoribonuclease Cas2 1, found in Moorella thermoacetica (strain ATCC 39073 / JCM 9320).